Consider the following 555-residue polypeptide: uncharacterized protein (555 aa).

The N-terminal stretch at 1–28 (MRSGLFGVLRWTAVGLVATLVASLALTA) is a signal peptide. Cysteine 29 carries the N-palmitoyl cysteine lipid modification. Cysteine 29 carries the S-diacylglycerol cysteine lipid modification.

The protein to M.tuberculosis Rv2585c and M.bovis Mb2616c.

The protein localises to the cell membrane. This is an uncharacterized protein from Mycobacterium leprae (strain TN).